The sequence spans 313 residues: Protein FixB (313 aa).

255-283 (LYLAVGISGQIQHMVGANASQTIFAINKD) is a binding site for FAD.

Belongs to the ETF alpha-subunit/FixB family. In terms of assembly, heterodimer of FixA and FixB.

It functions in the pathway amine and polyamine metabolism; carnitine metabolism. Required for anaerobic carnitine reduction. May bring reductant to CaiA. In Escherichia coli O1:K1 / APEC, this protein is Protein FixB.